Reading from the N-terminus, the 1001-residue chain is Translation initiation factor IF-2 (1001 aa).

The tract at residues 56–418 (PDYVHDPNAV…VEAGPPPISR (363 aa)) is disordered. Basic and acidic residues predominate over residues 70-84 (TEAHEERHEHEEAHE). The segment covering 85–108 (PAAAPKAAVEPETPVAPAPEAAPA) has biased composition (low complexity). Residues 109–120 (AKEERPAPEEPA) are compositionally biased toward basic and acidic residues. Pro residues-rich tracts occupy residues 136 to 170 (IHPP…PHAP), 180 to 194 (PARP…PSQT), 204 to 217 (RPAP…PTTT), 229 to 252 (QPFP…PPQQ), 305 to 322 (PAAP…PVPG), and 345 to 357 (GMPP…PRPQ). Residues 379–410 (SRGRPGDRRPVRQQRERTEEEKILRPQRRHVE) are compositionally biased toward basic and acidic residues. Residues 499–668 (RRAPVVTIMG…LLVADMQDLK (170 aa)) form the tr-type G domain. The segment at 508–515 (GHVDHGKT) is G1. 508–515 (GHVDHGKT) provides a ligand contact to GTP. The segment at 533 to 537 (GITQH) is G2. A G3 region spans residues 554 to 557 (DTPG). GTP is bound by residues 554–558 (DTPGH) and 608–611 (NKID). Residues 608–611 (NKID) form a G4 region. Positions 644 to 646 (SAR) are G5.

It belongs to the TRAFAC class translation factor GTPase superfamily. Classic translation factor GTPase family. IF-2 subfamily.

It is found in the cytoplasm. Its function is as follows. One of the essential components for the initiation of protein synthesis. Protects formylmethionyl-tRNA from spontaneous hydrolysis and promotes its binding to the 30S ribosomal subunits. Also involved in the hydrolysis of GTP during the formation of the 70S ribosomal complex. The chain is Translation initiation factor IF-2 from Solibacter usitatus (strain Ellin6076).